The following is a 352-amino-acid chain: Holliday junction branch migration complex subunit RuvB (352 aa).

The large ATPase domain (RuvB-L) stretch occupies residues 1-182 (MRIELLNTPP…FGINSRFDYY (182 aa)). Residues Ile-21, Arg-22, Gly-63, Lys-66, Thr-67, Thr-68, 129 to 131 (EDF), Arg-172, Tyr-182, and Arg-219 each bind ATP. Residue Thr-67 participates in Mg(2+) binding. Positions 183 to 253 (EPELLTRIII…IAMKTLECLE (71 aa)) are small ATPAse domain (RuvB-S). Residues 256–352 (EEGLDEMDKK…LPLFDESEAD (97 aa)) form a head domain (RuvB-H) region. DNA-binding residues include Arg-292, Arg-311, and Arg-316.

The protein belongs to the RuvB family. Homohexamer. Forms an RuvA(8)-RuvB(12)-Holliday junction (HJ) complex. HJ DNA is sandwiched between 2 RuvA tetramers; dsDNA enters through RuvA and exits via RuvB. An RuvB hexamer assembles on each DNA strand where it exits the tetramer. Each RuvB hexamer is contacted by two RuvA subunits (via domain III) on 2 adjacent RuvB subunits; this complex drives branch migration. In the full resolvosome a probable DNA-RuvA(4)-RuvB(12)-RuvC(2) complex forms which resolves the HJ.

It localises to the cytoplasm. The catalysed reaction is ATP + H2O = ADP + phosphate + H(+). Its function is as follows. The RuvA-RuvB-RuvC complex processes Holliday junction (HJ) DNA during genetic recombination and DNA repair, while the RuvA-RuvB complex plays an important role in the rescue of blocked DNA replication forks via replication fork reversal (RFR). RuvA specifically binds to HJ cruciform DNA, conferring on it an open structure. The RuvB hexamer acts as an ATP-dependent pump, pulling dsDNA into and through the RuvAB complex. RuvB forms 2 homohexamers on either side of HJ DNA bound by 1 or 2 RuvA tetramers; 4 subunits per hexamer contact DNA at a time. Coordinated motions by a converter formed by DNA-disengaged RuvB subunits stimulates ATP hydrolysis and nucleotide exchange. Immobilization of the converter enables RuvB to convert the ATP-contained energy into a lever motion, pulling 2 nucleotides of DNA out of the RuvA tetramer per ATP hydrolyzed, thus driving DNA branch migration. The RuvB motors rotate together with the DNA substrate, which together with the progressing nucleotide cycle form the mechanistic basis for DNA recombination by continuous HJ branch migration. Branch migration allows RuvC to scan DNA until it finds its consensus sequence, where it cleaves and resolves cruciform DNA. The protein is Holliday junction branch migration complex subunit RuvB of Chlorobium chlorochromatii (strain CaD3).